The following is a 141-amino-acid chain: MFACSKFVSTPSLVKSTSQLLSRPLSAVVLKRPEILTDESLSSLAVSCPLTSLVSSRSFQTSAISRDIDTAAKFIGAGAATVGVAGSGAGIGTVFGSLIIGYARNPSLKQQLFSYAILGFALSEAMGLFCLMVAFLILFAM.

The N-terminal 66 residues, 1–66, are a transit peptide targeting the mitochondrion; it reads MFACSKFVST…RSFQTSAISR (66 aa). The helical transmembrane segment at 82-102 threads the bilayer; that stretch reads VGVAGSGAGIGTVFGSLIIGY. Lys109 bears the N6,N6,N6-trimethyllysine mark. The chain crosses the membrane as a helical span at residues 117 to 137; it reads ILGFALSEAMGLFCLMVAFLI.

The protein belongs to the ATPase C chain family. In terms of assembly, F-type ATPases have 2 components, CF(1) - the catalytic core - and CF(0) - the membrane proton channel. CF(1) has five subunits: alpha(3), beta(3), gamma(1), delta(1), epsilon(1). CF(0) has three main subunits: a, b and c. Interacts with DNAJC30; interaction is direct. Trimethylated by ATPSCKMT at Lys-109. Methylation is required for proper incorporation of the C subunit into the ATP synthase complex and mitochondrial respiration.

The protein resides in the mitochondrion membrane. In terms of biological role, mitochondrial membrane ATP synthase (F(1)F(0) ATP synthase or Complex V) produces ATP from ADP in the presence of a proton gradient across the membrane which is generated by electron transport complexes of the respiratory chain. F-type ATPases consist of two structural domains, F(1) - containing the extramembraneous catalytic core and F(0) - containing the membrane proton channel, linked together by a central stalk and a peripheral stalk. During catalysis, ATP synthesis in the catalytic domain of F(1) is coupled via a rotary mechanism of the central stalk subunits to proton translocation. Part of the complex F(0) domain. A homomeric c-ring of probably 10 subunits is part of the complex rotary element. This chain is ATP synthase F(0) complex subunit C2, mitochondrial, found in Homo sapiens (Human).